The primary structure comprises 409 residues: S-adenosylmethionine synthase (409 aa).

H15 contributes to the ATP binding site. D17 contributes to the Mg(2+) binding site. E43 contacts K(+). Residues E56 and Q100 each contribute to the L-methionine site. The interval 100 to 110 (QSSDIAQGVNE) is flexible loop. ATP is bound by residues 171-173 (DGK), 248-249 (KF), D257, 263-264 (RK), A280, and K284. D257 contributes to the L-methionine binding site. K288 contacts L-methionine.

This sequence belongs to the AdoMet synthase family. As to quaternary structure, homotetramer; dimer of dimers. It depends on Mg(2+) as a cofactor. K(+) serves as cofactor.

Its subcellular location is the cytoplasm. The catalysed reaction is L-methionine + ATP + H2O = S-adenosyl-L-methionine + phosphate + diphosphate. Its pathway is amino-acid biosynthesis; S-adenosyl-L-methionine biosynthesis; S-adenosyl-L-methionine from L-methionine: step 1/1. Functionally, catalyzes the formation of S-adenosylmethionine (AdoMet) from methionine and ATP. The overall synthetic reaction is composed of two sequential steps, AdoMet formation and the subsequent tripolyphosphate hydrolysis which occurs prior to release of AdoMet from the enzyme. In Prochlorococcus marinus (strain NATL1A), this protein is S-adenosylmethionine synthase.